The sequence spans 268 residues: 3-methyl-2-oxobutanoate hydroxymethyltransferase (268 aa).

Positions 46 and 85 each coordinate Mg(2+). Residues 46-47 (DS), Asp85, and Lys115 each bind 3-methyl-2-oxobutanoate. Residue Glu117 coordinates Mg(2+). The active-site Proton acceptor is Glu184.

It belongs to the PanB family. As to quaternary structure, homodecamer; pentamer of dimers. Requires Mg(2+) as cofactor.

Its subcellular location is the cytoplasm. It carries out the reaction 3-methyl-2-oxobutanoate + (6R)-5,10-methylene-5,6,7,8-tetrahydrofolate + H2O = 2-dehydropantoate + (6S)-5,6,7,8-tetrahydrofolate. It functions in the pathway cofactor biosynthesis; (R)-pantothenate biosynthesis; (R)-pantoate from 3-methyl-2-oxobutanoate: step 1/2. Functionally, catalyzes the reversible reaction in which hydroxymethyl group from 5,10-methylenetetrahydrofolate is transferred onto alpha-ketoisovalerate to form ketopantoate. The chain is 3-methyl-2-oxobutanoate hydroxymethyltransferase from Magnetococcus marinus (strain ATCC BAA-1437 / JCM 17883 / MC-1).